The following is a 157-amino-acid chain: Arginine repressor (157 aa).

Belongs to the ArgR family.

It localises to the cytoplasm. It functions in the pathway amino-acid biosynthesis; L-arginine biosynthesis [regulation]. Its function is as follows. Regulates arginine biosynthesis genes. The protein is Arginine repressor of Colwellia psychrerythraea (strain 34H / ATCC BAA-681) (Vibrio psychroerythus).